Consider the following 139-residue polypeptide: Large ribosomal subunit protein uL13 (139 aa).

Belongs to the universal ribosomal protein uL13 family. Part of the 50S ribosomal subunit.

In terms of biological role, this protein is one of the early assembly proteins of the 50S ribosomal subunit, although it is not seen to bind rRNA by itself. It is important during the early stages of 50S assembly. The polypeptide is Large ribosomal subunit protein uL13 (Nitratiruptor sp. (strain SB155-2)).